The chain runs to 447 residues: tRNA-2-methylthio-N(6)-dimethylallyladenosine synthase (447 aa).

Residues 4-120 (RSFFIKTYGC…INELLERSRT (117 aa)) form the MTTase N-terminal domain. [4Fe-4S] cluster-binding residues include C13, C49, C83, C161, C165, and C168. The Radical SAM core domain maps to 147–382 (HEGEFRKFVT…QARQDEIGLE (236 aa)). The 62-residue stretch at 385 to 446 (QEYIGTTQEV…QHSLRGSIVE (62 aa)) folds into the TRAM domain.

Belongs to the methylthiotransferase family. MiaB subfamily. Monomer. It depends on [4Fe-4S] cluster as a cofactor.

The protein resides in the cytoplasm. The catalysed reaction is N(6)-dimethylallyladenosine(37) in tRNA + (sulfur carrier)-SH + AH2 + 2 S-adenosyl-L-methionine = 2-methylsulfanyl-N(6)-dimethylallyladenosine(37) in tRNA + (sulfur carrier)-H + 5'-deoxyadenosine + L-methionine + A + S-adenosyl-L-homocysteine + 2 H(+). Catalyzes the methylthiolation of N6-(dimethylallyl)adenosine (i(6)A), leading to the formation of 2-methylthio-N6-(dimethylallyl)adenosine (ms(2)i(6)A) at position 37 in tRNAs that read codons beginning with uridine. The chain is tRNA-2-methylthio-N(6)-dimethylallyladenosine synthase from Desulfotalea psychrophila (strain LSv54 / DSM 12343).